The chain runs to 313 residues: Methylenetetrahydrofolate dehydrogenase [NAD(+)] (313 aa).

Cys-152 is an active-site residue. Residues Arg-187–Ser-188, Asp-210–Ile-211, and Phe-270–Gly-272 each bind NAD(+).

This sequence belongs to the tetrahydrofolate dehydrogenase/cyclohydrolase family. In terms of assembly, homodimer.

The catalysed reaction is (6R)-5,10-methylene-5,6,7,8-tetrahydrofolate + NAD(+) = (6R)-5,10-methenyltetrahydrofolate + NADH. The protein operates within one-carbon metabolism; tetrahydrofolate interconversion. Its function is as follows. Catalyzes oxidation of cytoplasmic one-carbon units for purine biosynthesis. This Dictyostelium discoideum (Social amoeba) protein is Methylenetetrahydrofolate dehydrogenase [NAD(+)] (thfA).